The primary structure comprises 230 residues: ATP synthase subunit a 1 (230 aa).

Helical transmembrane passes span 20-40 (ATIVFSWLVMLILVLGSWLIT), 78-98 (FLPFIGTLFLFITMANLLTIF), 112-132 (AALALCVFVAVPIYGIKNVGI), 174-194 (LLVAILISIVPLFFPAVMTLF), and 195-215 (GLLVGVIQAYVFTILAMVYIA).

It belongs to the ATPase A chain family. F-type ATPases have 2 components, CF(1) - the catalytic core - and CF(0) - the membrane proton channel. CF(1) has five subunits: alpha(3), beta(3), gamma(1), delta(1), epsilon(1). CF(0) has four main subunits: a, b, b' and c.

It is found in the cellular thylakoid membrane. Key component of the proton channel; it plays a direct role in the translocation of protons across the membrane. This Crocosphaera subtropica (strain ATCC 51142 / BH68) (Cyanothece sp. (strain ATCC 51142)) protein is ATP synthase subunit a 1.